The following is a 172-amino-acid chain: Transcriptional repressor NrdR (172 aa).

A zinc finger lies at 3–34; it reads CPFCGEADTKVIDSRLVAEGDQVRRRRECLSC. The ATP-cone domain maps to 49-139; that stretch reads PRVVKQDGTR…VYRSFQDINE (91 aa).

It belongs to the NrdR family. Zn(2+) is required as a cofactor.

In terms of biological role, negatively regulates transcription of bacterial ribonucleotide reductase nrd genes and operons by binding to NrdR-boxes. In Marinobacter nauticus (strain ATCC 700491 / DSM 11845 / VT8) (Marinobacter aquaeolei), this protein is Transcriptional repressor NrdR.